Reading from the N-terminus, the 443-residue chain is Protein king tubby (443 aa).

Disordered stretches follow at residues 57–80 (TNGS…NNMR) and 98–191 (HELE…EGDV). Residues 68 to 80 (AMNTSRNHSNNMR) are compositionally biased toward polar residues. Residues 113–128 (QHQQSASHSANSTQSQ) show a composition bias toward low complexity. Ser136 carries the post-translational modification Phosphoserine. The segment covering 177–186 (NGTGNGTGGE) has biased composition (gly residues).

This sequence belongs to the TUB family.

It localises to the cytoplasm. Its subcellular location is the nucleus. It is found in the cell projection. The protein localises to the cilium membrane. The protein resides in the rhabdomere. In Drosophila simulans (Fruit fly), this protein is Protein king tubby.